A 336-amino-acid chain; its full sequence is uncharacterized protein (336 aa).

The disordered stretch occupies residues 196-222 (YKEGDDSNWDDFGSESEDDSKEAHSEE). A compositionally biased stretch (acidic residues) spans 201 to 215 (DSNWDDFGSESEDDS). The residue at position 211 (S211) is a Phosphoserine.

This is an uncharacterized protein from Schizosaccharomyces pombe (strain 972 / ATCC 24843) (Fission yeast).